The chain runs to 407 residues: Endo-1,4-beta-xylanase D (407 aa).

The N-terminal stretch at 1–19 (MTLVKSILLALAAGHVAQA) is a signal peptide. Residues 20 to 333 (QLNTAAKAAG…KPAYYGILAG (314 aa)) enclose the GH10 domain. Asn-118 carries N-linked (GlcNAc...) asparagine glycosylation. The active-site Proton donor is Glu-148. The Nucleophile role is filled by Glu-255. A disulfide bridge connects residues Cys-283 and Cys-289. Positions 337–364 (GSGSSSSTSSTTLITTTTPTASSSTTSA) are disordered. Residues 371–407 (SGAAHWGQCGGIGWSGPTICVSPYTCQVLNPYYSQCL) form the CBM1 domain.

Belongs to the glycosyl hydrolase 10 (cellulase F) family.

Its subcellular location is the secreted. The catalysed reaction is Endohydrolysis of (1-&gt;4)-beta-D-xylosidic linkages in xylans.. It participates in glycan degradation; xylan degradation. Its activity is regulated as follows. Inhibited by wheat xylanase inhibiting protein I (XIP-I). Functionally, endo-1,4-beta-xylanase involved in the hydrolysis of xylan, a major structural heterogeneous polysaccharide found in plant biomass representing the second most abundant polysaccharide in the biosphere, after cellulose. Shows an endo-mode of action on xylan forming mainly xylobiose and short-chain xylooligosaccharides (XOS). This chain is Endo-1,4-beta-xylanase D (xynD), found in Talaromyces funiculosus (Fruitlet core rot fungus).